The primary structure comprises 222 residues: Protein MKS1 (222 aa).

Residues 1–61 (MDPSEYFAGG…PNRDQPPPYI (61 aa)) form a disordered region. Residues 12-21 (PSDQQNQKRQ) are compositionally biased toward polar residues. The residue at position 30 (serine 30) is a Phosphoserine. Positions 37–46 (DSHKIKKPPK) are enriched in basic residues. Pro residues predominate over residues 47–61 (HPAPPPNRDQPPPYI). Serine 72 carries the post-translational modification Phosphoserine. Residues 83–92 (FMNVVQRLTG) carry the VQ motif. Residues 105–130 (GDVSPAARLASTENASPRGGKEPAAR) are disordered. Serine 108 and serine 120 each carry phosphoserine.

Interacts with MPK4, WRKY25 and WRKY33. In terms of processing, phosphorylated on serine residue by MPK4.

The protein resides in the nucleus. Its function is as follows. Regulator of plant defense response. May contribute to MPK4-regulated defense activation by coupling the kinase to specific WRKY transcription factors. This is Protein MKS1 (MKS1) from Arabidopsis thaliana (Mouse-ear cress).